The primary structure comprises 160 residues: Major pollen allergen Car b 1 isoform 2 (160 aa).

The protein belongs to the BetVI family.

This Carpinus betulus (European hornbeam) protein is Major pollen allergen Car b 1 isoform 2.